The sequence spans 279 residues: 3-methyl-2-oxobutanoate hydroxymethyltransferase (279 aa).

Mg(2+)-binding residues include Asp-43 and Asp-82. Residues 43 to 44 (DS), Asp-82, and Lys-112 contribute to the 3-methyl-2-oxobutanoate site. Glu-114 contributes to the Mg(2+) binding site. The Proton acceptor role is filled by Glu-181.

Belongs to the PanB family. As to quaternary structure, homodecamer; pentamer of dimers. Mg(2+) is required as a cofactor.

The protein localises to the cytoplasm. The catalysed reaction is 3-methyl-2-oxobutanoate + (6R)-5,10-methylene-5,6,7,8-tetrahydrofolate + H2O = 2-dehydropantoate + (6S)-5,6,7,8-tetrahydrofolate. It functions in the pathway cofactor biosynthesis; (R)-pantothenate biosynthesis; (R)-pantoate from 3-methyl-2-oxobutanoate: step 1/2. Functionally, catalyzes the reversible reaction in which hydroxymethyl group from 5,10-methylenetetrahydrofolate is transferred onto alpha-ketoisovalerate to form ketopantoate. This chain is 3-methyl-2-oxobutanoate hydroxymethyltransferase, found in Geobacillus thermodenitrificans (strain NG80-2).